Reading from the N-terminus, the 366-residue chain is Cobalt-precorrin-5B C(1)-methyltransferase (366 aa).

It belongs to the CbiD family.

It carries out the reaction Co-precorrin-5B + S-adenosyl-L-methionine = Co-precorrin-6A + S-adenosyl-L-homocysteine. It participates in cofactor biosynthesis; adenosylcobalamin biosynthesis; cob(II)yrinate a,c-diamide from sirohydrochlorin (anaerobic route): step 6/10. Functionally, catalyzes the methylation of C-1 in cobalt-precorrin-5B to form cobalt-precorrin-6A. The protein is Cobalt-precorrin-5B C(1)-methyltransferase of Paraburkholderia phymatum (strain DSM 17167 / CIP 108236 / LMG 21445 / STM815) (Burkholderia phymatum).